An 864-amino-acid chain; its full sequence is Leucine--tRNA ligase (864 aa).

A 'HIGH' region motif is present at residues 47–57 (PYPSGNLHMGH). The disordered stretch occupies residues 298–317 (SEQDRVADDRPKRGVATGGT). Residues 299-309 (EQDRVADDRPK) show a composition bias toward basic and acidic residues. The 'KMSKS' region signature appears at 622 to 626 (KMSKS). Lys-625 lines the ATP pocket.

This sequence belongs to the class-I aminoacyl-tRNA synthetase family.

The protein resides in the cytoplasm. The enzyme catalyses tRNA(Leu) + L-leucine + ATP = L-leucyl-tRNA(Leu) + AMP + diphosphate. This chain is Leucine--tRNA ligase, found in Synechococcus sp. (strain RCC307).